The sequence spans 431 residues: Enolase (431 aa).

Gln167 is a (2R)-2-phosphoglycerate binding site. Catalysis depends on Glu209, which acts as the Proton donor. Mg(2+)-binding residues include Asp246, Glu289, and Asp316. (2R)-2-phosphoglycerate contacts are provided by Lys341, Arg370, Ser371, and Lys392. Lys341 acts as the Proton acceptor in catalysis.

It belongs to the enolase family. As to quaternary structure, component of the RNA degradosome, a multiprotein complex involved in RNA processing and mRNA degradation. Mg(2+) is required as a cofactor.

It is found in the cytoplasm. The protein localises to the secreted. It localises to the cell surface. It carries out the reaction (2R)-2-phosphoglycerate = phosphoenolpyruvate + H2O. The protein operates within carbohydrate degradation; glycolysis; pyruvate from D-glyceraldehyde 3-phosphate: step 4/5. Its function is as follows. Catalyzes the reversible conversion of 2-phosphoglycerate (2-PG) into phosphoenolpyruvate (PEP). It is essential for the degradation of carbohydrates via glycolysis. This is Enolase from Chromohalobacter salexigens (strain ATCC BAA-138 / DSM 3043 / CIP 106854 / NCIMB 13768 / 1H11).